Here is a 372-residue protein sequence, read N- to C-terminus: MAKKDYYDVLGVERGADEKEIKRAYKKLAMKYHPDRTQGNKELEEKFKEIQEAYEVLSDKQKRANYDQYGHAAFEQGGFGGGGFSGADFGDIFGDMFGDIFGGGRARQRVVRGDDLRYDLEISLEEAVRGTTKDIQINTLAHCDSCDGSGAEKGSKVETCSTCHGAGRVRRQQGFFVTEQVCPSCHGSGKKIEKPCKSCHGDGRVHKKKNLSVKIPAGVDTGNQLRLSGEGAAGENGAPNGDLYVVIHVRDHHIFERDGSNLYCEVPISFTMAALGGEIEVPTLDGRVKLKIPAETQTGKLFRMRGKGVTSARSAYAGDLICKIIVETPVKLNEEQKALLRQLEESLEGSSNKPKSSSFFDGVKKFFDNLGK.

The J domain occupies 5–70 (DYYDVLGVER…QKRANYDQYG (66 aa)). The segment at 130-208 (GTTKDIQINT…CHGDGRVHKK (79 aa)) adopts a CR-type zinc-finger fold. 8 residues coordinate Zn(2+): cysteine 143, cysteine 146, cysteine 160, cysteine 163, cysteine 182, cysteine 185, cysteine 196, and cysteine 199. CXXCXGXG motif repeat units lie at residues 143-150 (CDSCDGSG), 160-167 (CSTCHGAG), 182-189 (CPSCHGSG), and 196-203 (CKSCHGDG).

Belongs to the DnaJ family. As to quaternary structure, homodimer. Zn(2+) is required as a cofactor.

It localises to the cytoplasm. Participates actively in the response to hyperosmotic and heat shock by preventing the aggregation of stress-denatured proteins and by disaggregating proteins, also in an autonomous, DnaK-independent fashion. Unfolded proteins bind initially to DnaJ; upon interaction with the DnaJ-bound protein, DnaK hydrolyzes its bound ATP, resulting in the formation of a stable complex. GrpE releases ADP from DnaK; ATP binding to DnaK triggers the release of the substrate protein, thus completing the reaction cycle. Several rounds of ATP-dependent interactions between DnaJ, DnaK and GrpE are required for fully efficient folding. Also involved, together with DnaK and GrpE, in the DNA replication of plasmids through activation of initiation proteins. The polypeptide is Chaperone protein DnaJ (Pasteurella multocida (strain Pm70)).